The chain runs to 64 residues: Putative calcium channel toxin Tx758 (64 aa).

Positions 1 to 18 (MSTFVIVFLLLTAVLCHA) are cleaved as a signal peptide. Positions 19–27 (EPALDETAR) are excised as a propeptide. 3 cysteine pairs are disulfide-bonded: Cys-29–Cys-43, Cys-36–Cys-49, and Cys-42–Cys-58.

This sequence belongs to the scorpion calcin-like family. In terms of tissue distribution, expressed by the venom gland.

The protein resides in the secreted. May increase intracellular calcium release through the activation of nuclear inositol 1,4,5-trisphosphate receptors (ITPR) of cardiomyocytes, thereby causing an increase in the contraction frequency of these cells. This chain is Putative calcium channel toxin Tx758, found in Buthus israelis (Israeli scorpion).